A 347-amino-acid chain; its full sequence is Nod factor export ATP-binding protein I (347 aa).

Residues 1-11 are compositionally biased toward basic and acidic residues; the sequence is MGENMEREMLR. The segment at 1–32 is disordered; the sequence is MGENMEREMLRPKTIAMDQNSASARSNPEREI. Positions 17–26 are enriched in polar residues; that stretch reads MDQNSASARS. The 231-residue stretch at 49–279 folds into the ABC transporter domain; sequence IDLQAVTMIY…IIGCPVIEVY (231 aa). 81–88 lines the ATP pocket; sequence GPNGAGKS.

The protein belongs to the ABC transporter superfamily. Lipooligosaccharide exporter (TC 3.A.1.102) family. The complex is composed of two ATP-binding proteins (NodI) and two transmembrane proteins (NodJ).

It localises to the cell inner membrane. Its function is as follows. Part of the ABC transporter complex NodIJ involved in the export of the nodulation factors (Nod factors), the bacterial signal molecules that induce symbiosis and subsequent nodulation induction. Nod factors are LCO (lipo-chitin oligosaccharide), a modified beta-1,4-linked N-acetylglucosamine oligosaccharide. This subunit is responsible for energy coupling to the transport system. The polypeptide is Nod factor export ATP-binding protein I (Neorhizobium galegae (Rhizobium galegae)).